Here is a 244-residue protein sequence, read N- to C-terminus: tRNA (guanine-N(1)-)-methyltransferase (244 aa).

Residues glycine 113 and 133–138 contribute to the S-adenosyl-L-methionine site; that span reads IGDYVL.

It belongs to the RNA methyltransferase TrmD family. As to quaternary structure, homodimer.

The protein resides in the cytoplasm. It carries out the reaction guanosine(37) in tRNA + S-adenosyl-L-methionine = N(1)-methylguanosine(37) in tRNA + S-adenosyl-L-homocysteine + H(+). Specifically methylates guanosine-37 in various tRNAs. The sequence is that of tRNA (guanine-N(1)-)-methyltransferase from Bacillus anthracis (strain A0248).